Consider the following 232-residue polypeptide: 2,3,4,5-tetrahydropyridine-2,6-dicarboxylate N-acetyltransferase (232 aa).

This sequence belongs to the transferase hexapeptide repeat family. DapH subfamily.

The enzyme catalyses (S)-2,3,4,5-tetrahydrodipicolinate + acetyl-CoA + H2O = L-2-acetamido-6-oxoheptanedioate + CoA. Its pathway is amino-acid biosynthesis; L-lysine biosynthesis via DAP pathway; LL-2,6-diaminopimelate from (S)-tetrahydrodipicolinate (acetylase route): step 1/3. In terms of biological role, catalyzes the transfer of an acetyl group from acetyl-CoA to tetrahydrodipicolinate. The protein is 2,3,4,5-tetrahydropyridine-2,6-dicarboxylate N-acetyltransferase of Streptococcus pneumoniae serotype 2 (strain D39 / NCTC 7466).